The primary structure comprises 146 residues: VHLTDAEKAAVTGLWGKVKVDEYGGEALGRLLVVYPWTQRFFEHFGDLSNADAIMHNPKVLAHGKKVLSSFGDGLNHLDNLKGTFAQLSELHCDKLHVDPENFRLLGNVLVVVLARHFHEEFTPDVQAAFQKVVTGVANALAHKYH.

Valine 1 is subject to N-acetylvaline; partial. Residues 2-146 enclose the Globin domain; it reads HLTDAEKAAV…VANALAHKYH (145 aa). At threonine 12 the chain carries Phosphothreonine. At lysine 59 the chain carries N6-acetyllysine. Histidine 63 contributes to the heme b binding site. Lysine 82 is modified (N6-acetyllysine). Histidine 92 serves as a coordination point for heme b. Residue cysteine 93 is modified to S-nitrosocysteine. Lysine 144 bears the N6-acetyllysine mark.

Belongs to the globin family. Heterotetramer of two alpha chains and two beta chains. In terms of tissue distribution, red blood cells.

In terms of biological role, involved in oxygen transport from the lung to the various peripheral tissues. This Procavia capensis habessinica (Abyssinian hyrax) protein is Hemoglobin subunit beta (HBB).